We begin with the raw amino-acid sequence, 163 residues long: Cyanate hydratase (163 aa).

Catalysis depends on residues arginine 103, glutamate 106, and serine 129.

This sequence belongs to the cyanase family.

The catalysed reaction is cyanate + hydrogencarbonate + 3 H(+) = NH4(+) + 2 CO2. Functionally, catalyzes the reaction of cyanate with bicarbonate to produce ammonia and carbon dioxide. The polypeptide is Cyanate hydratase (Ajellomyces capsulatus (strain H143) (Darling's disease fungus)).